The chain runs to 215 residues: ATP phosphoribosyltransferase (215 aa).

Belongs to the ATP phosphoribosyltransferase family. Short subfamily. As to quaternary structure, heteromultimer composed of HisG and HisZ subunits.

Its subcellular location is the cytoplasm. The enzyme catalyses 1-(5-phospho-beta-D-ribosyl)-ATP + diphosphate = 5-phospho-alpha-D-ribose 1-diphosphate + ATP. It functions in the pathway amino-acid biosynthesis; L-histidine biosynthesis; L-histidine from 5-phospho-alpha-D-ribose 1-diphosphate: step 1/9. In terms of biological role, catalyzes the condensation of ATP and 5-phosphoribose 1-diphosphate to form N'-(5'-phosphoribosyl)-ATP (PR-ATP). Has a crucial role in the pathway because the rate of histidine biosynthesis seems to be controlled primarily by regulation of HisG enzymatic activity. This Clostridium acetobutylicum (strain ATCC 824 / DSM 792 / JCM 1419 / IAM 19013 / LMG 5710 / NBRC 13948 / NRRL B-527 / VKM B-1787 / 2291 / W) protein is ATP phosphoribosyltransferase (hisG).